A 193-amino-acid polypeptide reads, in one-letter code: 7-methyl-GTP pyrophosphatase (193 aa).

Asp69 serves as the catalytic Proton acceptor.

It belongs to the Maf family. YceF subfamily. It depends on a divalent metal cation as a cofactor.

The protein localises to the cytoplasm. It carries out the reaction N(7)-methyl-GTP + H2O = N(7)-methyl-GMP + diphosphate + H(+). Its function is as follows. Nucleoside triphosphate pyrophosphatase that hydrolyzes 7-methyl-GTP (m(7)GTP). May have a dual role in cell division arrest and in preventing the incorporation of modified nucleotides into cellular nucleic acids. This Chromohalobacter salexigens (strain ATCC BAA-138 / DSM 3043 / CIP 106854 / NCIMB 13768 / 1H11) protein is 7-methyl-GTP pyrophosphatase.